The chain runs to 542 residues: Signal peptide peptidase-like 5 (542 aa).

The first 23 residues, 1 to 23 (MAAATAAVFALLMASALAGAAAG), serve as a signal peptide directing secretion. The Lumenal portion of the chain corresponds to 24 to 192 (GDIVHHDDEA…PDRPVVDTAE (169 aa)). Asn79 and Asn145 each carry an N-linked (GlcNAc...) asparagine glycan. The PA domain maps to 92-167 (CTSPKEKVSG…LPRDAGFALH (76 aa)). A helical membrane pass occupies residues 193 to 213 (VFLWLMAVGTVLCASYWSAWS). At 214–245 (AREALCEQEKLLKDGREVLLNVENGSSSGMID) the chain is on the cytoplasmic side. A helical membrane pass occupies residues 246–266 (INVASAIMFVVVASCFLIMLY). Topologically, residues 267 to 275 (KMMSSWFVE) are lumenal. A helical membrane pass occupies residues 276-296 (LLVVIFCVGGVEGLQTCLVAL). The Cytoplasmic portion of the chain corresponds to 297-316 (LSRWFRAASESFFKVPFFGA). Residues 317 to 337 (VSYLTLAVSPFCIVFAVLWAV) form a helical membrane-spanning segment. At 338-342 (HRHFT) the chain is on the lumenal side. Residues 343 to 363 (YAWIGQDILGIALIITVIQIV) traverse the membrane as a helical segment. The Cytoplasmic portion of the chain corresponds to 364–367 (RVPN). Residues 368 to 388 (LKVGSVLLSCAFFYDIFWVFV) form a helical membrane-spanning segment. Residue Asp382 is part of the active site. Residues 389-426 (SKRWFHESVMIVVARGDKTDEDGVPMLLKIPRMFDPWG) are Lumenal-facing. A helical membrane pass occupies residues 427–447 (GYSIIGFGDILLPGLLVAFAL). Asp435 is a catalytic residue. The Cytoplasmic segment spans residues 448-459 (RYDWAAKKSLQT). Residues 460-480 (GYFLWSMVAYGSGLLITYVAL) traverse the membrane as a helical segment. The Lumenal portion of the chain corresponds to 481 to 486 (NLMDGH). The chain crosses the membrane as a helical span at residues 487–507 (GQPALLYIVPFTLGALISLGW). A PAL motif is present at residues 489–491 (PAL). Over 508 to 542 (KRGELWNLWSKGEPERVCPHHMHMQPQPKTPPLVQ) the chain is Cytoplasmic.

The protein belongs to the peptidase A22B family. Glycosylated.

Its subcellular location is the endosome membrane. Its function is as follows. Intramembrane-cleaving aspartic protease (I-CLiP) that cleaves type II membrane signal peptides in the hydrophobic plane of the membrane. This chain is Signal peptide peptidase-like 5 (SPPL5), found in Oryza sativa subsp. japonica (Rice).